The sequence spans 352 residues: RING finger protein 39 (352 aa).

Residues cysteine 20–glycine 67 form an RING-type zinc finger. Positions proline 98–proline 118 are disordered. In terms of domain architecture, B30.2/SPRY spans glutamate 142 to alanine 352.

Expressed in the hippocampus. Expression is rapidly up-regulated in granule cells of the dentate gyrus after LTP induction.

It localises to the cytoplasm. It carries out the reaction S-ubiquitinyl-[E2 ubiquitin-conjugating enzyme]-L-cysteine + [acceptor protein]-L-lysine = [E2 ubiquitin-conjugating enzyme]-L-cysteine + N(6)-ubiquitinyl-[acceptor protein]-L-lysine.. Its pathway is protein modification; protein ubiquitination. Functionally, plays an inhibitory role in anti-RNA viral innate immunity by targeting the adapter DDX3X and promoting its 'Lys-48'-linked polyubiquitination. Alternatively, enhances the cGAS-STING pathway activation by promoting 'Lys-63'-linked ubiquitination of STING1, facilitating the STING1-TBK1 complex formation and STING1 activation. The polypeptide is RING finger protein 39 (Rnf39) (Rattus norvegicus (Rat)).